Consider the following 141-residue polypeptide: Calcitonin (141 aa).

The signal sequence occupies residues 1-25; it reads MGFQKFSPFLALSILVLLQAGSLHA. Positions 26 to 82 are excised as a propeptide; the sequence is APFRSALESSPADPATLSEDEARLLLAALVQDYVQMKASELEQEQEREGSSLDSPRS. Serine 43 is subject to Phosphoserine. Disordered regions lie at residues 64–85 and 111–141; these read SELEQEQEREGSSLDSPRSKRC and IGVGAPGKKRDMSSDLERDHRPHVSMPQNAN. Cysteine 85 and cysteine 91 are disulfide-bonded. Proline 116 bears the Proline amide mark. The span at 118 to 132 shows a compositional bias: basic and acidic residues; sequence KKRDMSSDLERDHRP.

It belongs to the calcitonin family.

The protein localises to the secreted. In terms of biological role, calcitonin is a peptide hormone that causes a rapid but short-lived drop in the level of calcium and phosphate in blood by promoting the incorporation of those ions in the bones. Calcitonin function is mediated by the calcitonin receptor/CALCR and the CALCR-RAMP2 (AMYR2) receptor complex. Katacalcin is a potent plasma calcium-lowering peptide. The chain is Calcitonin from Homo sapiens (Human).